An 803-amino-acid chain; its full sequence is H(+)/Cl(-) exchange transporter 7 (803 aa).

Residues 1 to 46 (MANVSKKVSWSGRDRDDEEGAPLLRRTGQPDEETPLLNGAGPGARQ) are disordered. Topologically, residues 1–124 (MANVSKKVSW…TAFRTVEIKR (124 aa)) are cytoplasmic. Serine 9 carries the phosphoserine modification. A run of 2 helical transmembrane segments spans residues 125–157 (WVICALIGILTGLVACFIDIVVENLAGLKYRVI) and 172–195 (FSLLLWATLNSAFVLVGSVIVAFI). The short motif at 201 to 205 (GSGIP) is the Selectivity filter part_1 element. Serine 202 contacts chloride. The segment at residues 204–211 (IPQIKCFL) is an intramembrane region (helical). 2 consecutive transmembrane segments (helical) span residues 221 to 239 (RLKTLVIKVSGVILSVVGG) and 245 to 262 (EGPMIHSGSVIAAGISQG). The short motif at 243 to 247 (GKEGP) is the Selectivity filter part_2 element. Intramembrane regions (helical) lie at residues 286 to 298 (FVSAGAAAGVSAA) and 302 to 310 (PVGGVLFSL). The next 5 membrane-spanning stretches (helical) occupy residues 320 to 339 (FLTWRIFFASMISTFTLNFV), 373 to 403 (IPVFIAMGVVGGILGAVFNALNYWLTMFRIR), 408 to 430 (PCLQVIEAMLVAAVTATVAFVLI), 485 to 505 (PMTLGLFTLVYFFLACWTYGL), and 510 to 533 (GVFIPSLLIGAAWGRLFGISLSYL). The short motif at 510–514 (GVFIP) is the Selectivity filter part_3 element. Phenylalanine 512 is a binding site for chloride. The helical intramembrane region spans 543–557 (GKYALMGAAAQLGGI). Residues 558–560 (VRM) constitute an intramembrane region (note=Loop between two helices). An intramembrane region (helical) is located at residues 561-572 (TLSLTVIMMEAT). Residues 573–576 (SNVT) constitute an intramembrane region (note=Loop between two helices). A helical membrane pass occupies residues 577 to 595 (YGFPIMLVLMTAKIVGDVF). Residues 596 to 803 (IEGLYDMHIQ…GLEELSLAQT (208 aa)) are Cytoplasmic-facing. Tyrosine 600 is a binding site for chloride. CBS domains lie at 629–693 (MSTP…VFVE) and 739–797 (MNPS…GLEE). Residues 656-658 (HNG) and 781-784 (TRKD) each bind ATP. Phosphoserine is present on serine 799.

It belongs to the chloride channel (TC 2.A.49) family. ClC-7/CLCN7 subfamily. Chloride channel 7 are heteromers of alpha (CLCN7) and beta (OSTM1) subunits. As to expression, liver, spleen, kidneys and brain.

It is found in the lysosome membrane. The catalysed reaction is 2 chloride(in) + H(+)(out) = 2 chloride(out) + H(+)(in). Its function is as follows. Slowly voltage-gated channel mediating the exchange of chloride ions against protons. Functions as antiporter and contributes to the acidification of the lysosome lumen and may be involved in maintaining lysosomal pH. The CLC channel family contains both chloride channels and proton-coupled anion transporters that exchange chloride or another anion for protons. The presence of conserved gating glutamate residues is typical for family members that function as antiporters. In Mus musculus (Mouse), this protein is H(+)/Cl(-) exchange transporter 7.